The following is a 156-amino-acid chain: Large ribosomal subunit protein uL15 (156 aa).

Positions 25-49 (RGIGCGKGKTSGRGHKGQKARSGTS) are disordered. The span at 34 to 43 (TSGRGHKGQK) shows a compositional bias: basic residues.

Belongs to the universal ribosomal protein uL15 family. In terms of assembly, part of the 50S ribosomal subunit.

Binds to the 23S rRNA. The sequence is that of Large ribosomal subunit protein uL15 from Wolbachia sp. subsp. Brugia malayi (strain TRS).